The sequence spans 382 residues: Galactokinase (382 aa).

34-37 contacts substrate; that stretch reads EHTD. ATP is bound at residue 124–130; the sequence is GAGLSSS. The Mg(2+) site is built by S130 and E162. D174 acts as the Proton acceptor in catalysis. Residue Y223 coordinates substrate.

Belongs to the GHMP kinase family. GalK subfamily.

It localises to the cytoplasm. It catalyses the reaction alpha-D-galactose + ATP = alpha-D-galactose 1-phosphate + ADP + H(+). Its pathway is carbohydrate metabolism; galactose metabolism. Its function is as follows. Catalyzes the transfer of the gamma-phosphate of ATP to D-galactose to form alpha-D-galactose-1-phosphate (Gal-1-P). This is Galactokinase from Salmonella schwarzengrund (strain CVM19633).